The sequence spans 548 residues: Chaperonin GroEL (548 aa).

Residues 30–33 (TLGP), Lys51, 87–91 (DGTTT), Gly415, 479–481 (NAA), and Asp495 each bind ATP.

This sequence belongs to the chaperonin (HSP60) family. Forms a cylinder of 14 subunits composed of two heptameric rings stacked back-to-back. Interacts with the co-chaperonin GroES.

Its subcellular location is the cytoplasm. The catalysed reaction is ATP + H2O + a folded polypeptide = ADP + phosphate + an unfolded polypeptide.. Functionally, together with its co-chaperonin GroES, plays an essential role in assisting protein folding. The GroEL-GroES system forms a nano-cage that allows encapsulation of the non-native substrate proteins and provides a physical environment optimized to promote and accelerate protein folding. In Klebsiella pneumoniae subsp. pneumoniae (strain ATCC 700721 / MGH 78578), this protein is Chaperonin GroEL.